Consider the following 126-residue polypeptide: Glycine cleavage system H protein (126 aa).

In terms of domain architecture, Lipoyl-binding spans 22–104 (VATIGITEYA…YEKAWMVKVE (83 aa)). N6-lipoyllysine is present on Lys63.

Belongs to the GcvH family. As to quaternary structure, the glycine cleavage system is composed of four proteins: P, T, L and H. (R)-lipoate serves as cofactor.

Its function is as follows. The glycine cleavage system catalyzes the degradation of glycine. The H protein shuttles the methylamine group of glycine from the P protein to the T protein. Functionally, is also involved in protein lipoylation via its role as an octanoyl/lipoyl carrier protein intermediate. This is Glycine cleavage system H protein from Staphylococcus aureus (strain MSSA476).